Reading from the N-terminus, the 520-residue chain is CBL-interacting serine/threonine-protein kinase 18 (520 aa).

Disordered stretches follow at residues 1–29 and 48–67; these read MAQA…PHPK and TDKD…SPRN. The span at 17-29 shows a compositional bias: pro residues; the sequence is PDPPPPPPPPHPK. A compositionally biased stretch (low complexity) spans 55–66; that stretch reads SPQSPRSPRSPR. A Protein kinase domain is found at 74–328; sequence YELGKLLGHG…IPEIMKNRWF (255 aa). ATP contacts are provided by residues 80-88 and Lys103; that span reads LGHGTFAKV. Asp196 functions as the Proton acceptor in the catalytic mechanism. Positions 214–243 are activation loop; it reads DFGLSAVAEQLRQDGLCHTFCGTPAYIAPE. At Ser218 the chain carries Phosphoserine. Thr232 bears the Phosphothreonine mark. The interval 349–368 is disordered; sequence EDEEEEASSSGRSSTVSESD. A compositionally biased stretch (low complexity) spans 356–366; that stretch reads SSSGRSSTVSE. In terms of domain architecture, NAF spans 382 to 406; the sequence is PRPSSLNAFDIISFSSGFDLSGLFE. A PPI region spans residues 410 to 439; that stretch reads GEGTRFVSGAPVSKIISKLEEIAKIVSFTV.

This sequence belongs to the protein kinase superfamily. CAMK Ser/Thr protein kinase family. SNF1 subfamily. In terms of assembly, interacts with CBL1 and CBL9. Mn(2+) is required as a cofactor.

The catalysed reaction is L-seryl-[protein] + ATP = O-phospho-L-seryl-[protein] + ADP + H(+). It catalyses the reaction L-threonyl-[protein] + ATP = O-phospho-L-threonyl-[protein] + ADP + H(+). CIPK serine-threonine protein kinases interact with CBL proteins. Binding of a CBL protein to the regulatory NAF domain of CIPK protein lead to the activation of the kinase in a calcium-dependent manner. The protein is CBL-interacting serine/threonine-protein kinase 18 (CIPK18) of Arabidopsis thaliana (Mouse-ear cress).